The chain runs to 264 residues: 4-hydroxy-tetrahydrodipicolinate reductase (264 aa).

An NAD(+)-binding site is contributed by 8-13 (GPRGKM). Position 36 (Lys36) interacts with NADP(+). NAD(+) contacts are provided by residues 97-99 (GTT) and 123-126 (APNF). His153 functions as the Proton donor/acceptor in the catalytic mechanism. His154 contributes to the (S)-2,3,4,5-tetrahydrodipicolinate binding site. The Proton donor role is filled by Lys157. Residue 163–164 (GT) coordinates (S)-2,3,4,5-tetrahydrodipicolinate.

The protein belongs to the DapB family.

It is found in the cytoplasm. It catalyses the reaction (S)-2,3,4,5-tetrahydrodipicolinate + NAD(+) + H2O = (2S,4S)-4-hydroxy-2,3,4,5-tetrahydrodipicolinate + NADH + H(+). It carries out the reaction (S)-2,3,4,5-tetrahydrodipicolinate + NADP(+) + H2O = (2S,4S)-4-hydroxy-2,3,4,5-tetrahydrodipicolinate + NADPH + H(+). It functions in the pathway amino-acid biosynthesis; L-lysine biosynthesis via DAP pathway; (S)-tetrahydrodipicolinate from L-aspartate: step 4/4. In terms of biological role, catalyzes the conversion of 4-hydroxy-tetrahydrodipicolinate (HTPA) to tetrahydrodipicolinate. The chain is 4-hydroxy-tetrahydrodipicolinate reductase from Halalkalibacterium halodurans (strain ATCC BAA-125 / DSM 18197 / FERM 7344 / JCM 9153 / C-125) (Bacillus halodurans).